Here is a 216-residue protein sequence, read N- to C-terminus: Imidazoleglycerol-phosphate dehydratase (216 aa).

S211 is subject to Phosphoserine.

Belongs to the imidazoleglycerol-phosphate dehydratase family.

It catalyses the reaction D-erythro-1-(imidazol-4-yl)glycerol 3-phosphate = 3-(imidazol-4-yl)-2-oxopropyl phosphate + H2O. Its pathway is amino-acid biosynthesis; L-histidine biosynthesis; L-histidine from 5-phospho-alpha-D-ribose 1-diphosphate: step 6/9. The sequence is that of Imidazoleglycerol-phosphate dehydratase (his5) from Schizosaccharomyces pombe (strain 972 / ATCC 24843) (Fission yeast).